The following is a 433-amino-acid chain: sn-glycerol-3-phosphate-binding periplasmic protein UgpB (433 aa).

A signal peptide spans Met1–Ala25. Sn-glycerol 3-phosphate-binding residues include Tyr67, Asp91, Ser146, Ser273, Gly307, Tyr346, and Arg397.

Belongs to the bacterial solute-binding protein 1 family. As to quaternary structure, the complex is composed of two ATP-binding proteins (UgpC), two transmembrane proteins (UgpA and UgpE) and a solute-binding protein (UgpB).

Its subcellular location is the periplasm. Its function is as follows. Part of the ABC transporter complex UgpBAEC involved in sn-glycerol-3-phosphate (G3P) import. Binds G3P. The protein is sn-glycerol-3-phosphate-binding periplasmic protein UgpB (ugpB) of Brucella abortus (strain 2308).